The primary structure comprises 702 residues: Methionine--tRNA ligase (702 aa).

The 'HIGH' region signature appears at 14–24 (PYANGPVHLGH). Zn(2+)-binding residues include Cys146, Cys149, Cys159, and Cys162. Residues 344–348 (KFSKS) carry the 'KMSKS' region motif. Residue Lys347 participates in ATP binding. A tRNA-binding domain is found at 601–702 (DFQKVDLRAA…GEKINGSSVQ (102 aa)).

It belongs to the class-I aminoacyl-tRNA synthetase family. MetG type 1 subfamily. As to quaternary structure, homodimer. Zn(2+) serves as cofactor.

It is found in the cytoplasm. It carries out the reaction tRNA(Met) + L-methionine + ATP = L-methionyl-tRNA(Met) + AMP + diphosphate. Its function is as follows. Is required not only for elongation of protein synthesis but also for the initiation of all mRNA translation through initiator tRNA(fMet) aminoacylation. The protein is Methionine--tRNA ligase of Chlorobium phaeovibrioides (strain DSM 265 / 1930) (Prosthecochloris vibrioformis (strain DSM 265)).